The sequence spans 358 residues: Peptide chain release factor 1 (358 aa).

The residue at position 233 (Gln233) is an N5-methylglutamine.

Belongs to the prokaryotic/mitochondrial release factor family. Post-translationally, methylated by PrmC. Methylation increases the termination efficiency of RF1.

The protein resides in the cytoplasm. Functionally, peptide chain release factor 1 directs the termination of translation in response to the peptide chain termination codons UAG and UAA. The sequence is that of Peptide chain release factor 1 from Staphylococcus aureus (strain MRSA252).